The chain runs to 702 residues: MADS-box MEF2 type transcription factor MIG1 (702 aa).

The 61-residue stretch at 1–61 folds into the MADS-box domain; that stretch reads MGRRKIEIKA…KKLYEYSSGD (61 aa). Disordered stretches follow at residues 73–608 and 658–702; these read GGAT…NIDT and PSFL…KVDS. Positions 86–96 are enriched in acidic residues; the sequence is GGDDDDEEEGD. The segment covering 132–144 has biased composition (pro residues); the sequence is ASPPIPNGVPFPP. A compositionally biased stretch (low complexity) spans 145-155; the sequence is HGHGVPRGHTP. A compositionally biased stretch (polar residues) spans 180-195; sequence GSPQVNGFGFGQQQSM. Pro residues predominate over residues 201-241; that stretch reads TTMPPHMPPQMAPGPPFPYPQHPQHPPHPPHPPHPPHPQQP. Composition is skewed to low complexity over residues 273–284, 326–343, and 350–371; these read PMGMQRHSVSPP, ESPQQIEPPQHQHQQQPE, and EQQQQQQQSQQSQQPQEPQSEP. Residues 456–465 are compositionally biased toward polar residues; the sequence is VDESTSNASE. 2 stretches are compositionally biased toward low complexity: residues 487–512 and 530–553; these read RASISSVSSAPESAPAPPSRSNSLRA and DGSGSATAESASSAQGGASTDATS. Residues 554-567 are compositionally biased toward polar residues; sequence QSTRQNDSHSSTNM. Residues 587–600 are compositionally biased toward pro residues; it reads PPNPFAPKRPPQHP. The segment covering 693-702 has biased composition (basic and acidic residues); it reads NEPKRVKVDS.

This sequence belongs to the MEF2 family. As to quaternary structure, interacts with MAPK MPS1.

The protein resides in the nucleus. Its function is as follows. Transcription factor acting downstream of the MPS1 MAP kinase (MAPK) cascade during conidiation and plant infection. Required for overcoming plant defense responses and the differentiation of secondary infectious hyphae in live plant cells. The protein is MADS-box MEF2 type transcription factor MIG1 of Pyricularia oryzae (strain 70-15 / ATCC MYA-4617 / FGSC 8958) (Rice blast fungus).